We begin with the raw amino-acid sequence, 432 residues long: Putative D-alanyl-D-alanine carboxypeptidase (432 aa).

The chain crosses the membrane as a helical; Signal-anchor span at residues 7-25 (ATVLLTFSLSAFAVEYPVL).

The protein belongs to the peptidase S12 family. YfeW subfamily.

The protein localises to the cell inner membrane. It carries out the reaction Preferential cleavage: (Ac)2-L-Lys-D-Ala-|-D-Ala. Also transpeptidation of peptidyl-alanyl moieties that are N-acyl substituents of D-alanine.. This chain is Putative D-alanyl-D-alanine carboxypeptidase, found in Salmonella paratyphi A (strain ATCC 9150 / SARB42).